Reading from the N-terminus, the 117-residue chain is UPF0102 protein RHOS4_03930 (117 aa).

It belongs to the UPF0102 family.

This chain is UPF0102 protein RHOS4_03930, found in Cereibacter sphaeroides (strain ATCC 17023 / DSM 158 / JCM 6121 / CCUG 31486 / LMG 2827 / NBRC 12203 / NCIMB 8253 / ATH 2.4.1.) (Rhodobacter sphaeroides).